A 240-amino-acid chain; its full sequence is Putative glycyl-radical enzyme activating enzyme MJ1227 (240 aa).

Residues 14-232 (IDYPKKASAV…KKYIDNVVIR (219 aa)) enclose the Radical SAM core domain. Residues Cys-29, Cys-33, and Cys-36 each coordinate [4Fe-4S] cluster. S-adenosyl-L-methionine-binding positions include 35-37 (YCH), Gly-71, and 126-128 (FDK).

Belongs to the organic radical-activating enzymes family. It depends on [4Fe-4S] cluster as a cofactor.

It catalyses the reaction glycyl-[protein] + reduced [flavodoxin] + S-adenosyl-L-methionine = glycin-2-yl radical-[protein] + semiquinone [flavodoxin] + 5'-deoxyadenosine + L-methionine + H(+). In Methanocaldococcus jannaschii (strain ATCC 43067 / DSM 2661 / JAL-1 / JCM 10045 / NBRC 100440) (Methanococcus jannaschii), this protein is Putative glycyl-radical enzyme activating enzyme MJ1227.